Consider the following 85-residue polypeptide: DNA-directed RNA polymerase subunit omega (85 aa).

It belongs to the RNA polymerase subunit omega family. In terms of assembly, the RNAP catalytic core consists of 2 alpha, 1 beta, 1 beta' and 1 omega subunit. When a sigma factor is associated with the core the holoenzyme is formed, which can initiate transcription.

It carries out the reaction RNA(n) + a ribonucleoside 5'-triphosphate = RNA(n+1) + diphosphate. Functionally, promotes RNA polymerase assembly. Latches the N- and C-terminal regions of the beta' subunit thereby facilitating its interaction with the beta and alpha subunits. The chain is DNA-directed RNA polymerase subunit omega from Latilactobacillus sakei subsp. sakei (strain 23K) (Lactobacillus sakei subsp. sakei).